The following is a 582-amino-acid chain: MEPSKLFIMSDNATVAPGPVVNAAGKKTFRTCFRILVLSVQAVTLILVIVTLGELIRMINDQGLSNQLSSITDKIRESAAVIASAVGVMNQVIHGVTVSLPLQIEGNQNQLLSTLATICTNRNQVSNCSTNIPLVNDLRFINGINKFIIEDYATHDFSIGNPLNMPSFIPTATSPNGCTRIPSFSLGKTHWCYTHNVINANCKDHTSSNQYVSMGILVQTASGYPMFKTLKIQYLSDGLNRKSCSIATVPDGCAMYCYVSTQLEANDYAGSSPPTQKLTLLFYNDTITERTISPSGLEGNWATLVPGVGSGIYFENKLIFPAYGGVLPNSTLGVKSAREFFRPVNPYNPCSGPPQELDQRALRSYFPRYFSSRRVQSAFLVCAWNQILVTNCELVVPSNNQTLMGAEGRVLLINNRLLYYQRSTSWWPYELLYEISFTFTNSGQSSVNMSWIPIYSFTPPGSGNCSGKNVCPTVCVSGVYLDPWPLTPYSHQSGINRNFYFTGALLNSSTTRVNPTLYVSALNNLKVLAPYGTQGLFASYTTTTCFQDTGDASVYCVYIMELASNIVGEFQILPVLARLTIT.

Over 1 to 34 (MEPSKLFIMSDNATVAPGPVVNAAGKKTFRTCFR) the chain is Intravirion. The chain crosses the membrane as a helical; Signal-anchor for type II membrane protein span at residues 35-55 (ILVLSVQAVTLILVIVTLGEL). Residues 56 to 582 (IRMINDQGLS…LPVLARLTIT (527 aa)) lie on the Virion surface side of the membrane. 3 disulfide bridges follow: cysteine 178-cysteine 202, cysteine 192-cysteine 253, and cysteine 244-cysteine 257. An involved in neuraminidase activity region spans residues 240-245 (NRKSCS). N-linked (GlcNAc...) asparagine; by host glycans are attached at residues asparagine 284 and asparagine 329. Intrachain disulfides connect cysteine 350–cysteine 471, cysteine 382–cysteine 392, and cysteine 465–cysteine 475. Residues asparagine 400 and asparagine 448 are each glycosylated (N-linked (GlcNAc...) asparagine; by host). The N-linked (GlcNAc...) asparagine; by host glycan is linked to asparagine 507. A disulfide bridge links cysteine 545 with cysteine 556.

This sequence belongs to the paramyxoviruses hemagglutinin-neuraminidase family. Homotetramer; composed of disulfide-linked homodimers. Interacts with F protein trimer.

The protein localises to the virion membrane. The protein resides in the host cell membrane. It catalyses the reaction Hydrolysis of alpha-(2-&gt;3)-, alpha-(2-&gt;6)-, alpha-(2-&gt;8)- glycosidic linkages of terminal sialic acid residues in oligosaccharides, glycoproteins, glycolipids, colominic acid and synthetic substrates.. Functionally, attaches the virus to alpha-2,3-linked sialic acid-containing cell receptors and thereby initiating infection. Binding of HN protein to the receptor induces a conformational change that allows the F protein to trigger virion/cell membranes fusion. Binds to the glycan motifs sialyl Lewis (SLe) and GM2 ganglioside (GM2-glycan). In terms of biological role, neuraminidase activity ensures the efficient spread of the virus by dissociating the mature virions from the neuraminic acid containing glycoproteins. This Homo sapiens (Human) protein is Hemagglutinin-neuraminidase (HN).